The primary structure comprises 716 residues: Protein C-mannosyl-transferase DPY19L3 (716 aa).

Over 1 to 43 (MMYIRQRKETKPIEVSEDFPSPKEDVKLEKKLPSGCASGRFWK) the chain is Cytoplasmic. A helical membrane pass occupies residues 44 to 64 (ILSSAVGGTVALCIGLLTSVY). The Lumenal segment spans residues 65 to 154 (LATLHENDLW…RVLPIQKYLE (90 aa)). Residue N118 is glycosylated (N-linked (GlcNAc...) asparagine). Residues 155–182 (PVYFYIYTLFGLQAVYVTALYITSWLLS) traverse the membrane as a helical segment. The Cytoplasmic portion of the chain corresponds to 183–184 (GT). The name=3 intramembrane region spans 185-197 (WLSGLLAALWYVT). Topologically, residues 198-215 (NRIDTTRVEFTIPLRENW) are cytoplasmic. Residues 216–230 (ALPFFAIQIAAITYF) constitute an intramembrane region (name=4). The Cytoplasmic segment spans residues 231 to 239 (LRPNLQPLS). Residues 240–256 (ERLTLLAIFVSTFLFSL) traverse the membrane as a helical segment. The Lumenal portion of the chain corresponds to 257 to 262 (TWQFNQ). The helical transmembrane segment at 263 to 279 (FMMLLQALVLFILDSLD) threads the bilayer. The Cytoplasmic segment spans residues 280–289 (MLPAMKATWL). A helical transmembrane segment spans residues 290–306 (YGIQISCLLLVCTLQFF). Residues 307–308 (NS) are Lumenal-facing. Residues 309-323 (MILGSLLISFNLSVL) traverse the membrane as a helical segment. Residues 324–338 (IVRKLQKNLKTGSFL) lie on the Cytoplasmic side of the membrane. Residues 339–359 (TRIWKLLLHLLLVFCLTLFLN) traverse the membrane as a helical segment. Over 360–414 (NIIKKVLNLKSDEHIFKFLKAKFGFGATRDFDANLYLCEEAFGLLPLNTFQRLSE) the chain is Lumenal. Residues 415 to 437 (TLLFYAYMFVLVVTVVTASVVAF) traverse the membrane as a helical segment. Residues 438–465 (HNLSDSTSLKSMDQTRKRAVDLKPEAAY) lie on the Cytoplasmic side of the membrane. A helical transmembrane segment spans residues 466–485 (NLIHTILFGVLALSTMRMKY). Over 486-487 (LW) the chain is Lumenal. Residues 488–499 (TSHMCVFASFGL) form a helical membrane-spanning segment. Topologically, residues 500 to 522 (CSSEVWELLLRLVHLCNPKRIWV) are cytoplasmic. The chain crosses the membrane as a helical span at residues 523–539 (LRYLVPVLTLLYLCYKS). At 540–716 (WPGVMDELSE…FHVYKLSRNK (177 aa)) the chain is on the lumenal side. N-linked (GlcNAc...) asparagine glycosylation is present at N704.

Belongs to the dpy-19 family.

It localises to the endoplasmic reticulum membrane. It carries out the reaction L-tryptophyl-[protein] + a di-trans,poly-cis-dolichyl beta-D-mannosyl phosphate = C-alpha-D-mannosyl-L-tryptophyl-[protein] + a di-trans,poly-cis-dolichyl phosphate + H(+). It participates in protein modification; protein glycosylation. Functionally, C-mannosyltransferase that mediates C-mannosylation of tryptophan residues on target proteins. The reaction occurs on the luminal side of the endoplasmic reticulum and involves the transfer of a mannose unit from a dolichylphosphate mannose (Dol-P-Man) donor to an acceptor protein containing a WxxW or WxxC consensus sequence. C-mannosylates RSPO1, a Wnt signaling regulator, preferentially at the first Trp residue in the sequence WxxW. C-mannosylates the netrin receptor UNC5A, preferentially at the third tryptophan of WxxWxxWxxC sequence. The protein is Protein C-mannosyl-transferase DPY19L3 (Dpy19l3) of Mus musculus (Mouse).